We begin with the raw amino-acid sequence, 93 residues long: Cytochrome c (93 aa).

Positions 1 to 13 (AALPPGDAAAAQG) are enriched in low complexity. The segment at 1-21 (AALPPGDAAAAQGGSNGVGPN) is disordered. A heme c-binding site is contributed by methionine 70.

This sequence belongs to the cytochrome c family. Binds 1 heme c group covalently per subunit.

The protein localises to the mitochondrion intermembrane space. Its function is as follows. Electron carrier protein. The oxidized form of the cytochrome c heme group can accept an electron from the heme group of the cytochrome c1 subunit of cytochrome reductase. Cytochrome c then transfers this electron to the cytochrome oxidase complex, the final protein carrier in the mitochondrial electron-transport chain. This chain is Cytochrome c, found in Trypanosoma brucei brucei.